A 492-amino-acid polypeptide reads, in one-letter code: 2-succinylbenzoate--CoA ligase (492 aa).

The protein belongs to the ATP-dependent AMP-binding enzyme family. MenE subfamily.

The catalysed reaction is 2-succinylbenzoate + ATP + CoA = 2-succinylbenzoyl-CoA + AMP + diphosphate. It participates in quinol/quinone metabolism; 1,4-dihydroxy-2-naphthoate biosynthesis; 1,4-dihydroxy-2-naphthoate from chorismate: step 5/7. It functions in the pathway quinol/quinone metabolism; menaquinone biosynthesis. In terms of biological role, converts 2-succinylbenzoate (OSB) to 2-succinylbenzoyl-CoA (OSB-CoA). The protein is 2-succinylbenzoate--CoA ligase of Staphylococcus aureus (strain bovine RF122 / ET3-1).